The following is an 82-amino-acid chain: Small ribosomal subunit protein bS16 (82 aa).

It belongs to the bacterial ribosomal protein bS16 family.

The chain is Small ribosomal subunit protein bS16 from Yersinia enterocolitica serotype O:8 / biotype 1B (strain NCTC 13174 / 8081).